The following is a 251-amino-acid chain: 3-deoxy-manno-octulosonate cytidylyltransferase (251 aa).

Belongs to the KdsB family.

The protein localises to the cytoplasm. The enzyme catalyses 3-deoxy-alpha-D-manno-oct-2-ulosonate + CTP = CMP-3-deoxy-beta-D-manno-octulosonate + diphosphate. It participates in nucleotide-sugar biosynthesis; CMP-3-deoxy-D-manno-octulosonate biosynthesis; CMP-3-deoxy-D-manno-octulosonate from 3-deoxy-D-manno-octulosonate and CTP: step 1/1. Its pathway is bacterial outer membrane biogenesis; lipopolysaccharide biosynthesis. Its function is as follows. Activates KDO (a required 8-carbon sugar) for incorporation into bacterial lipopolysaccharide in Gram-negative bacteria. The protein is 3-deoxy-manno-octulosonate cytidylyltransferase of Chromobacterium violaceum (strain ATCC 12472 / DSM 30191 / JCM 1249 / CCUG 213 / NBRC 12614 / NCIMB 9131 / NCTC 9757 / MK).